A 347-amino-acid polypeptide reads, in one-letter code: Ornithine carbamoyltransferase (347 aa).

Residues 56–59, glutamine 83, arginine 107, and 134–137 each bind carbamoyl phosphate; these read STRT and HPTQ. L-ornithine contacts are provided by residues asparagine 168, aspartate 232, and 236–237; that span reads SM. Carbamoyl phosphate is bound by residues 274–275 and arginine 320; that span reads CL.

The protein belongs to the aspartate/ornithine carbamoyltransferase superfamily. OTCase family.

It is found in the cytoplasm. It carries out the reaction carbamoyl phosphate + L-ornithine = L-citrulline + phosphate + H(+). Functionally, reversibly catalyzes the transfer of the carbamoyl group from carbamoyl phosphate (CP) to the N(epsilon) atom of ornithine (ORN) to produce L-citrulline. This chain is Ornithine carbamoyltransferase, found in Blochmanniella floridana.